The primary structure comprises 256 residues: Omega-amidase YafV (256 aa).

The 231-residue stretch at 4–234 (LKLTLLQQPL…AAQLDAELSL (231 aa)) folds into the CN hydrolase domain. The active-site Proton acceptor is glutamate 42. Lysine 107 is an active-site residue. Catalysis depends on cysteine 141, which acts as the Nucleophile.

The protein belongs to the carbon-nitrogen hydrolase superfamily. NIT1/NIT2 family.

It catalyses the reaction a monoamide of a dicarboxylate + H2O = a dicarboxylate + NH4(+). In terms of biological role, hydrolyzes alpha-ketoglutaramate (a-KGM) to alpha-ketoglutarate (alpha-KG) and ammonia (specific activity 21 umol/min/mg), has very weak activity on L-glutamine, and no activity on deaminated glutathione (dGSH) or glutathione. May function as a metabolite repair enzyme. The chain is Omega-amidase YafV from Yersinia enterocolitica.